The primary structure comprises 93 residues: DNA-directed RNA polymerase subunit omega (93 aa).

The protein belongs to the RNA polymerase subunit omega family. The RNAP catalytic core consists of 2 alpha, 1 beta, 1 beta' and 1 omega subunit. When a sigma factor is associated with the core the holoenzyme is formed, which can initiate transcription.

It carries out the reaction RNA(n) + a ribonucleoside 5'-triphosphate = RNA(n+1) + diphosphate. Its function is as follows. Promotes RNA polymerase assembly. Latches the N- and C-terminal regions of the beta' subunit thereby facilitating its interaction with the beta and alpha subunits. The chain is DNA-directed RNA polymerase subunit omega from Corynebacterium urealyticum (strain ATCC 43042 / DSM 7109).